Reading from the N-terminus, the 395-residue chain is Phosphoglycerate kinase (395 aa).

Substrate is bound by residues 21 to 23 (DLN), R36, 59 to 62 (HLGR), R113, and R146. ATP-binding positions include K197, E324, and 350 to 353 (GGDT).

Belongs to the phosphoglycerate kinase family. In terms of assembly, monomer.

The protein localises to the cytoplasm. The catalysed reaction is (2R)-3-phosphoglycerate + ATP = (2R)-3-phospho-glyceroyl phosphate + ADP. It participates in carbohydrate degradation; glycolysis; pyruvate from D-glyceraldehyde 3-phosphate: step 2/5. In Acinetobacter baylyi (strain ATCC 33305 / BD413 / ADP1), this protein is Phosphoglycerate kinase.